A 2039-amino-acid chain; its full sequence is PHD finger protein 3 (2039 aa).

Phosphoserine is present on residues Ser97 and Ser125. A compositionally biased stretch (polar residues) spans 144–168 (STIAKRSNAAPLSNTKKASGKTVST). The interval 144-178 (STIAKRSNAAPLSNTKKASGKTVSTAKAGVKQPER) is disordered. Phosphoserine occurs at positions 283 and 299. Basic and acidic residues predominate over residues 460-472 (ESHETANLQDDRN). 3 disordered regions span residues 460–492 (ESHETANLQDDRNSQSSSVSYLESKSVKSKHTK), 528–555 (VKRNTDVPESQQNFHRPVKVRKKQIDKE), and 596–685 (LSDK…SLDE). Residues 473-483 (SQSSSVSYLES) are compositionally biased toward low complexity. Residues 596 to 612 (LSDKSHAHPGCLKEPHH) are compositionally biased toward basic and acidic residues. Positions 617–640 (GHVSHSSQKQCHKPQQQAPAMKTN) are enriched in polar residues. Positions 642–670 (HVKEELEHPGVEHFKEEDKLKLKKPEKNL) are enriched in basic and acidic residues. A Glycyl lysine isopeptide (Lys-Gly) (interchain with G-Cter in SUMO2) cross-link involves residue Lys644. Ser680 bears the Phosphoserine mark. A PHD-type zinc finger spans residues 717-772 (SKQCGFCKKPHGNRFMVGCGRCDDWFHGDCVGLSLSQAQQMGEEDKEYVCVKCCAE). The interval 860-904 (GQPVLPRRSSEEKSEKIPKESTTVTCTGEKASKPGTHEKQEMKKK) is disordered. Composition is skewed to basic and acidic residues over residues 867–878 (RSSEEKSEKIPK) and 889–900 (KASKPGTHEKQE). The 120-residue stretch at 927–1046 (IRQSVRHSLK…MIEKEQREVE (120 aa)) folds into the TFIIS central domain. Residue Lys964 forms a Glycyl lysine isopeptide (Lys-Gly) (interchain with G-Cter in SUMO2) linkage. Ser1014 is modified (phosphoserine). Residues 1078–1109 (EPAANKSLEKPEGSEKQKEEVDSMSKDTTSQH) form a disordered region. Basic and acidic residues predominate over residues 1084 to 1102 (SLEKPEGSEKQKEEVDSMS). Ser1133, Ser1148, and Ser1178 each carry phosphoserine. Disordered stretches follow at residues 1171–1191 (FEEEKQESPKSTFSPAPRPEM), 1360–1380 (STSHIAETPESAPPIALPPDK), and 1581–1623 (KQEE…VGKG). Basic and acidic residues predominate over residues 1581–1598 (KQEETVESKEKTLKRQLQ). A phosphoserine mark is found at Ser1614 and Ser1642. Disordered stretches follow at residues 1643 to 1684 (PQFI…LPGL) and 1776 to 1800 (PSKSITFTSRSTSPRTSTNFSPMRP). Residues 1666–1684 (ESKDGDSCRNGEKHMLPGL) are compositionally biased toward basic and acidic residues. A compositionally biased stretch (low complexity) spans 1781-1797 (TFTSRSTSPRTSTNFSP). Residues Arg1867 and Arg1877 each carry the asymmetric dimethylarginine modification. The interval 1884–2039 (FYQVKDIRRP…DHTDRTKSKR (156 aa)) is disordered. 2 stretches are compositionally biased toward basic and acidic residues: residues 1888-1902 (KDIRRPERRHSDPWG) and 1912-2039 (PFNR…KSKR). A phosphoserine mark is found at Ser1898 and Ser1925. A Glycyl lysine isopeptide (Lys-Gly) (interchain with G-Cter in SUMO2) cross-link involves residue Lys1931.

As to expression, ubiquitous. Expression is significantly reduced or lost in glioblastomas, glioblastoma cell lines, anaplastic astrocytomas, and astrocytomas.

The polypeptide is PHD finger protein 3 (PHF3) (Homo sapiens (Human)).